The following is a 215-amino-acid chain: dITP/XTP pyrophosphatase (215 aa).

T13–K18 provides a ligand contact to substrate. D74 (proton acceptor) is an active-site residue. D74 contacts Mg(2+). Substrate contacts are provided by residues S75, F163–D166, K186, and H199–R200.

This sequence belongs to the HAM1 NTPase family. As to quaternary structure, homodimer. Mg(2+) is required as a cofactor.

It catalyses the reaction XTP + H2O = XMP + diphosphate + H(+). The catalysed reaction is dITP + H2O = dIMP + diphosphate + H(+). The enzyme catalyses ITP + H2O = IMP + diphosphate + H(+). Functionally, pyrophosphatase that catalyzes the hydrolysis of nucleoside triphosphates to their monophosphate derivatives, with a high preference for the non-canonical purine nucleotides XTP (xanthosine triphosphate), dITP (deoxyinosine triphosphate) and ITP. Seems to function as a house-cleaning enzyme that removes non-canonical purine nucleotides from the nucleotide pool, thus preventing their incorporation into DNA/RNA and avoiding chromosomal lesions. The sequence is that of dITP/XTP pyrophosphatase from Bartonella quintana (strain Toulouse) (Rochalimaea quintana).